The following is a 402-amino-acid chain: uncharacterized protein (402 aa).

The next 12 helical transmembrane spans lie at 11–31, 48–68, 80–100, 108–125, 140–160, 167–187, 219–239, 254–274, 286–306, 308–328, 347–367, and 373–393; these read LALAFLLGMLAILGPLNIDMY, LVQLSLTACLVGLTIGQLIVG, LLICIFLFALSSLFCALSPNI, FLQGFTASAGLVLSRAIV, LLMVITAVAPMVAPMTGGAIL, WHTIFHVLMIIGFLLVLLIAL, FMGYALTVGFIHGGSFAYVSG, VFSILFGINGLAIISGSFIIG, LRIAVITAMIATAVLLTMTMI, GPLATLVISIFIYMITIGMVL, SALLGMLPLLLGSIVSPLVGI, and VPMGAIMFVTAVIGSLAFFGL.

Belongs to the major facilitator superfamily. Bcr/CmlA family.

The protein resides in the cell membrane. This is an uncharacterized protein from Bacillus subtilis (strain 168).